The primary structure comprises 206 residues: Guanylate kinase (206 aa).

A Guanylate kinase-like domain is found at 6–184; the sequence is GTLYIISAPS…ALGDLKAIFR (179 aa). 13-20 contacts ATP; it reads APSGAGKS.

It belongs to the guanylate kinase family.

The protein localises to the cytoplasm. The enzyme catalyses GMP + ATP = GDP + ADP. Functionally, essential for recycling GMP and indirectly, cGMP. The chain is Guanylate kinase from Pseudomonas fluorescens (strain ATCC BAA-477 / NRRL B-23932 / Pf-5).